Consider the following 271-residue polypeptide: Elongation factor Ts (271 aa).

Positions 76–79 (TDFV) are involved in Mg(2+) ion dislocation from EF-Tu.

The protein belongs to the EF-Ts family.

It localises to the cytoplasm. In terms of biological role, associates with the EF-Tu.GDP complex and induces the exchange of GDP to GTP. It remains bound to the aminoacyl-tRNA.EF-Tu.GTP complex up to the GTP hydrolysis stage on the ribosome. The sequence is that of Elongation factor Ts from Mycobacterium bovis (strain BCG / Pasteur 1173P2).